Consider the following 423-residue polypeptide: Serine hydroxymethyltransferase (423 aa).

Residues Leu-125 and 129 to 131 (GHL) each bind (6S)-5,6,7,8-tetrahydrofolate. Lys-234 carries the N6-(pyridoxal phosphate)lysine modification. Glu-249 provides a ligand contact to (6S)-5,6,7,8-tetrahydrofolate.

The protein belongs to the SHMT family. As to quaternary structure, homodimer. The cofactor is pyridoxal 5'-phosphate.

Its subcellular location is the cytoplasm. It catalyses the reaction (6R)-5,10-methylene-5,6,7,8-tetrahydrofolate + glycine + H2O = (6S)-5,6,7,8-tetrahydrofolate + L-serine. Its pathway is one-carbon metabolism; tetrahydrofolate interconversion. It functions in the pathway amino-acid biosynthesis; glycine biosynthesis; glycine from L-serine: step 1/1. In terms of biological role, catalyzes the reversible interconversion of serine and glycine with tetrahydrofolate (THF) serving as the one-carbon carrier. This reaction serves as the major source of one-carbon groups required for the biosynthesis of purines, thymidylate, methionine, and other important biomolecules. Also exhibits THF-independent aldolase activity toward beta-hydroxyamino acids, producing glycine and aldehydes, via a retro-aldol mechanism. In Thermobifida fusca (strain YX), this protein is Serine hydroxymethyltransferase.